The sequence spans 107 residues: UPF0145 protein YbjQ (107 aa).

It belongs to the UPF0145 family.

The polypeptide is UPF0145 protein YbjQ (Escherichia coli O139:H28 (strain E24377A / ETEC)).